The following is a 262-amino-acid chain: MRFGLNIDHIVTLREIRKTYEPEILEALFIAKNTHKVDLITIHLREDKRHIQNEDVLRLLEISPLPINIECSINATITDFLCSLKNKPSKVTIVPENRNEVTTEGGLDCSLKGLEEVIRAYHNKGIEVSLFIDPLKDSLHFAREHQVKQVEFHTGVYANLHNALYSNANNQIHAISALKDKSPKELKEELHNAFLQLRRMSKEAFFMGITACAGHGLNYTNVKELLKIPSLRELNIGHSVVSKAVLVGLEKAILEMAQLIKR.

Residue asparagine 6 coordinates 3-amino-2-oxopropyl phosphate. 8 to 9 is a 1-deoxy-D-xylulose 5-phosphate binding site; the sequence is DH. 3-amino-2-oxopropyl phosphate is bound at residue arginine 17. Residue histidine 43 is the Proton acceptor of the active site. 1-deoxy-D-xylulose 5-phosphate is bound by residues arginine 45 and histidine 50. Glutamate 70 functions as the Proton acceptor in the catalytic mechanism. 1-deoxy-D-xylulose 5-phosphate is bound at residue threonine 102. Histidine 215 (proton donor) is an active-site residue. 3-amino-2-oxopropyl phosphate contacts are provided by residues glycine 216 and 237 to 238; that span reads GH.

It belongs to the PNP synthase family. In terms of assembly, homooctamer; tetramer of dimers.

It is found in the cytoplasm. The catalysed reaction is 3-amino-2-oxopropyl phosphate + 1-deoxy-D-xylulose 5-phosphate = pyridoxine 5'-phosphate + phosphate + 2 H2O + H(+). The protein operates within cofactor biosynthesis; pyridoxine 5'-phosphate biosynthesis; pyridoxine 5'-phosphate from D-erythrose 4-phosphate: step 5/5. Its function is as follows. Catalyzes the complicated ring closure reaction between the two acyclic compounds 1-deoxy-D-xylulose-5-phosphate (DXP) and 3-amino-2-oxopropyl phosphate (1-amino-acetone-3-phosphate or AAP) to form pyridoxine 5'-phosphate (PNP) and inorganic phosphate. In Helicobacter pylori (strain P12), this protein is Pyridoxine 5'-phosphate synthase.